The following is a 119-amino-acid chain: Cytochrome c55X (119 aa).

Positions 1-20 are cleaved as a signal peptide; the sequence is MNAPPDFRRAASHALWLALA. Heme c is bound by residues Cys-51, Cys-54, and His-55.

Binds 1 heme c group covalently per subunit.

Its subcellular location is the periplasm. Functionally, monoheme c-type cytochrome. The polypeptide is Cytochrome c55X (nirC) (Pseudomonas aeruginosa (strain ATCC 15692 / DSM 22644 / CIP 104116 / JCM 14847 / LMG 12228 / 1C / PRS 101 / PAO1)).